A 598-amino-acid polypeptide reads, in one-letter code: Elongation factor 4 (598 aa).

One can recognise a tr-type G domain in the interval 2 to 184; it reads NNIRNFAIIA…AIVAKLPAPQ (183 aa). GTP contacts are provided by residues 14-19 and 131-134; these read DHGKST and NKVD.

Belongs to the TRAFAC class translation factor GTPase superfamily. Classic translation factor GTPase family. LepA subfamily.

Its subcellular location is the cell membrane. It carries out the reaction GTP + H2O = GDP + phosphate + H(+). Its function is as follows. Required for accurate and efficient protein synthesis under certain stress conditions. May act as a fidelity factor of the translation reaction, by catalyzing a one-codon backward translocation of tRNAs on improperly translocated ribosomes. Back-translocation proceeds from a post-translocation (POST) complex to a pre-translocation (PRE) complex, thus giving elongation factor G a second chance to translocate the tRNAs correctly. Binds to ribosomes in a GTP-dependent manner. The protein is Elongation factor 4 of Wolbachia sp. subsp. Drosophila simulans (strain wRi).